The primary structure comprises 219 residues: Proline-rich protein 27 (219 aa).

Positions 1-15 (MKLLLWACIVCVAFA) are cleaved as a signal peptide. Over residues 155-204 (AAEPAAEAPVGAEPAAEAPVAAEPAAEAPVGVEPAAEEPSPAEPATAKPA) the composition is skewed to low complexity. The interval 155-219 (AAEPAAEAPV…PSPSLEQANQ (65 aa)) is disordered.

The protein resides in the secreted. This is Proline-rich protein 27 (PRR27) from Homo sapiens (Human).